We begin with the raw amino-acid sequence, 114 residues long: MIVPFGHVLLLAGALFGLGVFCAVARRNLIMIVLGVEIMLNAASIAFIGAAARWQSMEGQAFVLFILAVAATEVSIGLAIIVYAFRRTGSFDPAAYNLMKAGDAMQSFERRGPQ.

A run of 3 helical transmembrane segments spans residues 1–21 (MIVP…LGVF), 29–49 (LIMI…AFIG), and 62–82 (FVLF…AIIV).

Belongs to the complex I subunit 4L family. As to quaternary structure, NDH-1 is composed of 14 different subunits. Subunits NuoA, H, J, K, L, M, N constitute the membrane sector of the complex.

The protein localises to the cell inner membrane. It carries out the reaction a quinone + NADH + 5 H(+)(in) = a quinol + NAD(+) + 4 H(+)(out). In terms of biological role, NDH-1 shuttles electrons from NADH, via FMN and iron-sulfur (Fe-S) centers, to quinones in the respiratory chain. The immediate electron acceptor for the enzyme in this species is believed to be ubiquinone. Couples the redox reaction to proton translocation (for every two electrons transferred, four hydrogen ions are translocated across the cytoplasmic membrane), and thus conserves the redox energy in a proton gradient. The chain is NADH-quinone oxidoreductase subunit K 2 from Syntrophobacter fumaroxidans (strain DSM 10017 / MPOB).